Reading from the N-terminus, the 258-residue chain is Acyl-[acyl-carrier-protein]--UDP-N-acetylglucosamine O-acyltransferase (258 aa).

This sequence belongs to the transferase hexapeptide repeat family. LpxA subfamily. As to quaternary structure, homotrimer.

It is found in the cytoplasm. It catalyses the reaction a (3R)-hydroxyacyl-[ACP] + UDP-N-acetyl-alpha-D-glucosamine = a UDP-3-O-[(3R)-3-hydroxyacyl]-N-acetyl-alpha-D-glucosamine + holo-[ACP]. The protein operates within glycolipid biosynthesis; lipid IV(A) biosynthesis; lipid IV(A) from (3R)-3-hydroxytetradecanoyl-[acyl-carrier-protein] and UDP-N-acetyl-alpha-D-glucosamine: step 1/6. Its function is as follows. Involved in the biosynthesis of lipid A, a phosphorylated glycolipid that anchors the lipopolysaccharide to the outer membrane of the cell. In Pseudomonas fluorescens (strain ATCC BAA-477 / NRRL B-23932 / Pf-5), this protein is Acyl-[acyl-carrier-protein]--UDP-N-acetylglucosamine O-acyltransferase.